Consider the following 198-residue polypeptide: Holliday junction branch migration complex subunit RuvA (198 aa).

A domain I region spans residues 1–63 (MYDYIKGQLT…EDAHLLFGFH (63 aa)). The interval 64–142 (TEDEKDVFLK…EAPQETGNTK (79 aa)) is domain II. Residues 143–147 (ARSNK) are flexible linker. The segment at 148 to 198 (AGNTQLDEAIEALLALGYKATELKKIRAFFEGTSETAEQYIKSALKLLMKG) is domain III.

This sequence belongs to the RuvA family. In terms of assembly, homotetramer. Forms an RuvA(8)-RuvB(12)-Holliday junction (HJ) complex. HJ DNA is sandwiched between 2 RuvA tetramers; dsDNA enters through RuvA and exits via RuvB. An RuvB hexamer assembles on each DNA strand where it exits the tetramer. Each RuvB hexamer is contacted by two RuvA subunits (via domain III) on 2 adjacent RuvB subunits; this complex drives branch migration. In the full resolvosome a probable DNA-RuvA(4)-RuvB(12)-RuvC(2) complex forms which resolves the HJ.

The protein localises to the cytoplasm. Its function is as follows. The RuvA-RuvB-RuvC complex processes Holliday junction (HJ) DNA during genetic recombination and DNA repair, while the RuvA-RuvB complex plays an important role in the rescue of blocked DNA replication forks via replication fork reversal (RFR). RuvA specifically binds to HJ cruciform DNA, conferring on it an open structure. The RuvB hexamer acts as an ATP-dependent pump, pulling dsDNA into and through the RuvAB complex. HJ branch migration allows RuvC to scan DNA until it finds its consensus sequence, where it cleaves and resolves the cruciform DNA. This is Holliday junction branch migration complex subunit RuvA from Streptococcus pyogenes serotype M12 (strain MGAS2096).